Consider the following 309-residue polypeptide: MVGDLLGLFAAHFAHLHGLNTIVFDSLSEVGGQPQMLYPFKQINDIPAYNSISGTDLIQKLKHDIKNETEIITNHKVVDVTKQSDGFIIDNIIYARSIIIATGAGAFKPKELPLKISDEIKEKIHYFVKDPSQFKNQTIGVFGGGDSALDLALEVAKYANVKLIHRRDQFRGLESNVKKLKSLKNVEILTPYLPKKIELINNQLDISLKKMGVEQLRNVQLDQIVVAYGFRANNRFAKKWGINLEQSNIPVDPTMKTNIDGIYAAGDVVTYPGRVPLIALGFGEAQIAITSIMRNLFPEKSLTIHSTSI.

The FAD site is built by Asp25, Gln33, Tyr38, Val77, Phe107, Asp267, and Thr307.

This sequence belongs to the ferredoxin--NADP reductase type 2 family. Homodimer. The cofactor is FAD.

The catalysed reaction is 2 reduced [2Fe-2S]-[ferredoxin] + NADP(+) + H(+) = 2 oxidized [2Fe-2S]-[ferredoxin] + NADPH. The chain is Ferredoxin--NADP reductase from Lactobacillus acidophilus (strain ATCC 700396 / NCK56 / N2 / NCFM).